We begin with the raw amino-acid sequence, 35 residues long: SPEVMKSLSENFCKAMDQCKQELNLPDEVIKDLYN.

This sequence belongs to the PBP/GOBP family. Antenna.

Its function is as follows. This major soluble protein in olfactory sensilla of male moths might serve to solubilize the extremely hydrophobic pheromone molecules and to transport pheromone through the aqueous lymph to receptors located on olfactory cilia. In Hyalophora cecropia (Cecropia moth), this protein is Pheromone-binding protein.